The primary structure comprises 101 residues: Small ribosomal subunit protein uS14 (101 aa).

Belongs to the universal ribosomal protein uS14 family. In terms of assembly, part of the 30S ribosomal subunit. Contacts proteins S3 and S10.

Its function is as follows. Binds 16S rRNA, required for the assembly of 30S particles and may also be responsible for determining the conformation of the 16S rRNA at the A site. The chain is Small ribosomal subunit protein uS14 from Aliivibrio fischeri (strain ATCC 700601 / ES114) (Vibrio fischeri).